Reading from the N-terminus, the 864-residue chain is Ribosome biogenesis protein ERB1 (864 aa).

Basic and acidic residues predominate over residues 1–52 (MAVDKGRRPVPPERRAQGRKRAEPGDVTIRETRTRPVHTPEPEPELLAKDGI). Disordered stretches follow at residues 1-153 (MAVD…VKEG) and 191-231 (ESRN…STED). The span at 53–71 (LELEDDDDNDDDDDDDDDD) shows a compositional bias: acidic residues. Residues 72 to 83 (KSNHHDGAPKNE) show a composition bias toward basic and acidic residues. Positions 100–135 (DDGDEDEEEDDEDEDEDASDDEAFDSDDLENWDEEA) are enriched in acidic residues. 6 WD repeats span residues 509-549 (AHAP…CVAT), 559-599 (ADRS…KTMY), 694-732 (NSAM…LVKT), 735-774 (PGVR…RPYK), 778-817 (YHSR…DLLQ), and 833-864 (QDAL…LWTP).

Belongs to the WD repeat BOP1/ERB1 family. Component of the NOP7 complex, composed of ERB1, NOP7 and YTM1. The complex is held together by ERB1, which interacts with NOP7 via its N-terminal domain and with YTM1 via a high-affinity interaction between the seven-bladed beta-propeller domains of the 2 proteins. The NOP7 complex associates with the 66S pre-ribosome.

The protein localises to the nucleus. It localises to the nucleolus. It is found in the nucleoplasm. Functionally, component of the NOP7 complex, which is required for maturation of the 25S and 5.8S ribosomal RNAs and formation of the 60S ribosome. The sequence is that of Ribosome biogenesis protein ERB1 from Malassezia globosa (strain ATCC MYA-4612 / CBS 7966) (Dandruff-associated fungus).